Consider the following 185-residue polypeptide: Folate transporter FolT (185 aa).

The next 4 helical transmembrane spans lie at 34 to 54 (LTVGTNVLQVSFAFVTMSLIA), 64 to 84 (LIAAILDVIGATIINPGAFFV), 114 to 134 (VAVGLVLLIANIGLNSIWLVM), and 157 to 177 (LIMFPIQVGISYFLLNNQVIS).

As to quaternary structure, in E.coli forms a stable energy-coupling factor (ECF) transporter complex probably composed of a membrane-embedded substrate-binding protein (S component), two ATP-binding proteins (A components) and a transmembrane protein (T component).

The protein localises to the cell membrane. In terms of biological role, folate-binding protein that interacts with the energy-coupling factor (ECF) ABC-transporter complex. Unlike classic ABC transporters this ECF transporter provides the energy necessary to transport a number of different substrates. The substrates themselves are bound by transmembrane, not extracytoplasmic soluble proteins. Upon coexpression with EcfA1A2T in E.coli allows 5-formyltetrahydrofolate uptake; uptake requires both FolT and EcfA1A2T. This Leuconostoc mesenteroides subsp. mesenteroides (strain ATCC 8293 / DSM 20343 / BCRC 11652 / CCM 1803 / JCM 6124 / NCDO 523 / NBRC 100496 / NCIMB 8023 / NCTC 12954 / NRRL B-1118 / 37Y) protein is Folate transporter FolT (folT).